Here is a 443-residue protein sequence, read N- to C-terminus: MSELNMTPREIVAYLDEYIIGQKEAKKSIAIAFRNRYRRLQLEKSLQEEITPKNILMIGSTGVGKTEIARRIAKIMKLPFVKVEASKYTEVGFVGRDVESMVRDLVNNSVLLVENEHKEKLKDKIEEAVIEKIAKKLLPPLPNGVSEEKKQEYANSLLKMQQRIVQGELDSREIEIEVRKKSIEIDSNVPPEILRVQENVIKFFHKEQDKVKKTLSVKEAKEALKAEISDTLLDGEAIKMEGLKRAESSGVIFIDEIDKIAVSSKEGGRQDPSKEGVQRDLLPIVEGSVVNTKYGPIKTEHILFIAAGAFHLSKPSDLIPELQGRFPLRVELESLTEEIMYMILTQTKTSIIKQYQALLKVEGVGIAFEDNAIKELAKLSYNANQKSEDIGARRLHTTIEKVLEDISFEAENYSGQNVTITKELVQSKLEDLVADENLVKYIL.

ATP is bound by residues I20, 62–67, D255, E321, and R393; that span reads GVGKTE.

It belongs to the ClpX chaperone family. HslU subfamily. A double ring-shaped homohexamer of HslV is capped on each side by a ring-shaped HslU homohexamer. The assembly of the HslU/HslV complex is dependent on binding of ATP.

It localises to the cytoplasm. Its function is as follows. ATPase subunit of a proteasome-like degradation complex; this subunit has chaperone activity. The binding of ATP and its subsequent hydrolysis by HslU are essential for unfolding of protein substrates subsequently hydrolyzed by HslV. HslU recognizes the N-terminal part of its protein substrates and unfolds these before they are guided to HslV for hydrolysis. The polypeptide is ATP-dependent protease ATPase subunit HslU (Helicobacter pylori (strain Shi470)).